Reading from the N-terminus, the 204-residue chain is Probable nicotinate-nucleotide adenylyltransferase (204 aa).

Belongs to the NadD family.

It catalyses the reaction nicotinate beta-D-ribonucleotide + ATP + H(+) = deamido-NAD(+) + diphosphate. Its pathway is cofactor biosynthesis; NAD(+) biosynthesis; deamido-NAD(+) from nicotinate D-ribonucleotide: step 1/1. Catalyzes the reversible adenylation of nicotinate mononucleotide (NaMN) to nicotinic acid adenine dinucleotide (NaAD). This chain is Probable nicotinate-nucleotide adenylyltransferase, found in Methylacidiphilum infernorum (isolate V4) (Methylokorus infernorum (strain V4)).